Consider the following 442-residue polypeptide: 3-isopropylmalate dehydratase large subunit (442 aa).

[4Fe-4S] cluster is bound by residues cysteine 347, cysteine 407, and cysteine 410.

Belongs to the aconitase/IPM isomerase family. LeuC type 1 subfamily. In terms of assembly, heterodimer of LeuC and LeuD. It depends on [4Fe-4S] cluster as a cofactor.

The enzyme catalyses (2R,3S)-3-isopropylmalate = (2S)-2-isopropylmalate. It participates in amino-acid biosynthesis; L-leucine biosynthesis; L-leucine from 3-methyl-2-oxobutanoate: step 2/4. Its function is as follows. Catalyzes the isomerization between 2-isopropylmalate and 3-isopropylmalate, via the formation of 2-isopropylmaleate. This chain is 3-isopropylmalate dehydratase large subunit, found in Buchnera aphidicola subsp. Uroleucon solidaginis.